A 339-amino-acid polypeptide reads, in one-letter code: Glycerol-3-phosphate dehydrogenase [NAD(P)+] (339 aa).

NADPH-binding residues include serine 15, tyrosine 16, histidine 36, and lysine 110. Positions 110, 139, and 141 each coordinate sn-glycerol 3-phosphate. Residue alanine 143 participates in NADPH binding. Sn-glycerol 3-phosphate-binding residues include lysine 195, aspartate 248, serine 258, arginine 259, and asparagine 260. The active-site Proton acceptor is lysine 195. An NADPH-binding site is contributed by arginine 259. NADPH contacts are provided by valine 283 and glutamate 285.

Belongs to the NAD-dependent glycerol-3-phosphate dehydrogenase family.

It localises to the cytoplasm. The catalysed reaction is sn-glycerol 3-phosphate + NAD(+) = dihydroxyacetone phosphate + NADH + H(+). It catalyses the reaction sn-glycerol 3-phosphate + NADP(+) = dihydroxyacetone phosphate + NADPH + H(+). Its pathway is membrane lipid metabolism; glycerophospholipid metabolism. Functionally, catalyzes the reduction of the glycolytic intermediate dihydroxyacetone phosphate (DHAP) to sn-glycerol 3-phosphate (G3P), the key precursor for phospholipid synthesis. The sequence is that of Glycerol-3-phosphate dehydrogenase [NAD(P)+] from Klebsiella pneumoniae (strain 342).